A 608-amino-acid polypeptide reads, in one-letter code: MNREERLKRRDRIRNFSIIAHIDHGKSTLADRILEKTGALSEREMKEQALDSMELERERGITIKLNAVQLHYKAKDGEDYILHLIDTPGHVDFTYEVSRSLAACEGAILVVDAAQGIEAQTLANVYLAIDNNLEILPVINKIDLPSADPERVRQEIEDVIGLDASEAVLASAKVGIGIDEILEQIVQKIPAPSGDPDAPLKALIFDSLYDPYRGVVAYIRVVEGTVKAGQKIKMMATGKEFEVVEVGVFTPKAKVVDELTVGDVGYLTASIKNVSDTRVGDTITHADNPANEPLPGYRRLNPMVFCGLYPIDTARYNDLREALEKLQLNDAALQFEPETSQALGFGFRCGFLGLLHMEIIQERLEREFNIDIIATAPSVVYKVYLTDGTELAVDNPSNMPDPQKIERVEEPYVRATIMVPNDYVGPVMELCQKKRGIFGDMQYLDERRVTLTYELPLAEIVYDFFDILKSSTKGYASFDYELIGYKPSKLVKMDILLNGEKVDALSFIVHRDSAYDRGKVIVEKLKDLIPRQQFEVPVQAAIGNKIIARSTIKALRKNVLAKCYGGDISRKRKLLEKQKEGKKRMKQVGSVEVPQEAFMAVLKMDDQK.

One can recognise a tr-type G domain in the interval D11 to S193. GTP is bound by residues D23–T28 and N140–D143.

Belongs to the TRAFAC class translation factor GTPase superfamily. Classic translation factor GTPase family. LepA subfamily.

It localises to the cell membrane. It catalyses the reaction GTP + H2O = GDP + phosphate + H(+). Required for accurate and efficient protein synthesis under certain stress conditions. May act as a fidelity factor of the translation reaction, by catalyzing a one-codon backward translocation of tRNAs on improperly translocated ribosomes. Back-translocation proceeds from a post-translocation (POST) complex to a pre-translocation (PRE) complex, thus giving elongation factor G a second chance to translocate the tRNAs correctly. Binds to ribosomes in a GTP-dependent manner. The polypeptide is Elongation factor 4 (Anoxybacillus flavithermus (strain DSM 21510 / WK1)).